The sequence spans 692 residues: Elongation factor G (692 aa).

The region spanning 8–283 is the tr-type G domain; the sequence is QDLRNIGIVA…AVVDYLPSPL (276 aa). GTP is bound by residues 17-24, 81-85, and 135-138; these read AHIDAGKT, DTPGH, and NKLD.

It belongs to the TRAFAC class translation factor GTPase superfamily. Classic translation factor GTPase family. EF-G/EF-2 subfamily.

The protein resides in the cytoplasm. Functionally, catalyzes the GTP-dependent ribosomal translocation step during translation elongation. During this step, the ribosome changes from the pre-translocational (PRE) to the post-translocational (POST) state as the newly formed A-site-bound peptidyl-tRNA and P-site-bound deacylated tRNA move to the P and E sites, respectively. Catalyzes the coordinated movement of the two tRNA molecules, the mRNA and conformational changes in the ribosome. In Hydrogenobaculum sp. (strain Y04AAS1), this protein is Elongation factor G.